Here is a 541-residue protein sequence, read N- to C-terminus: Arginine--tRNA ligase (541 aa).

The 'HIGH' region signature appears at 119–129; sequence ANPTGPLHIGH.

The protein belongs to the class-I aminoacyl-tRNA synthetase family. Monomer.

The protein localises to the cytoplasm. It carries out the reaction tRNA(Arg) + L-arginine + ATP = L-arginyl-tRNA(Arg) + AMP + diphosphate. This Helicobacter acinonychis (strain Sheeba) protein is Arginine--tRNA ligase.